The primary structure comprises 379 residues: tRNA-specific 2-thiouridylase MnmA (379 aa).

ATP is bound by residues 23–30 (AMSGGVDS) and L49. C117 acts as the Nucleophile in catalysis. A disulfide bond links C117 and C214. G141 lines the ATP pocket. The tract at residues 163–165 (RDQ) is interaction with tRNA. The active-site Cysteine persulfide intermediate is the C214.

It belongs to the MnmA/TRMU family.

The protein resides in the cytoplasm. It carries out the reaction S-sulfanyl-L-cysteinyl-[protein] + uridine(34) in tRNA + AH2 + ATP = 2-thiouridine(34) in tRNA + L-cysteinyl-[protein] + A + AMP + diphosphate + H(+). In terms of biological role, catalyzes the 2-thiolation of uridine at the wobble position (U34) of tRNA, leading to the formation of s(2)U34. This Cereibacter sphaeroides (strain ATCC 17029 / ATH 2.4.9) (Rhodobacter sphaeroides) protein is tRNA-specific 2-thiouridylase MnmA.